Here is an 842-residue protein sequence, read N- to C-terminus: Elongation factor 2 (842 aa).

One can recognise a tr-type G domain in the interval 17–346; it reads TNVRNMSVIA…MIVLHLPSPV (330 aa). GTP is bound by residues 26-33, 158-161, and 213-215; these read AHVDHGKS, NKVD, and SGL. A Diphthamide modification is found at H699.

Belongs to the TRAFAC class translation factor GTPase superfamily. Classic translation factor GTPase family. EF-G/EF-2 subfamily.

The protein localises to the cytoplasm. The enzyme catalyses GTP + H2O = GDP + phosphate + H(+). Catalyzes the GTP-dependent ribosomal translocation step during translation elongation. During this step, the ribosome changes from the pre-translocational (PRE) to the post-translocational (POST) state as the newly formed A-site-bound peptidyl-tRNA and P-site-bound deacylated tRNA move to the P and E sites, respectively. Catalyzes the coordinated movement of the two tRNA molecules, the mRNA and conformational changes in the ribosome. This chain is Elongation factor 2 (EFT2), found in Candida albicans (strain SC5314 / ATCC MYA-2876) (Yeast).